Consider the following 360-residue polypeptide: Putative mRNA-decapping protein (360 aa).

The CCHC-type zinc finger occupies 11–28 (HICSNCGRSGHEFRNCIE). A Nudix hydrolase domain is found at 163–347 (YKYDNILYHF…KKRILTRVYL (185 aa)). The short motif at 242–264 (GRRDKRSEENMVCACREFEEETG) is the Nudix box element. Glu-249 serves as a coordination point for Mg(2+). The active-site Nucleophile is Glu-258. A Mg(2+)-binding site is contributed by Glu-262.

Belongs to the Nudix hydrolase family. DIPP subfamily. Requires Mg(2+) as cofactor. It depends on Mn(2+) as a cofactor.

The catalysed reaction is diphospho-myo-inositol polyphosphate + H2O = myo-inositol polyphosphate + phosphate.. Its function is as follows. Might function as a decapping enzyme required for the removal of the 5'-end m7GpppN cap tethered to viral and host mRNAs to allow their decay in cells. In addition to the mRNA cap, probably also efficiently hydrolyzes diphosphoinositol polyphosphates. The protein is Putative mRNA-decapping protein of Acanthamoeba polyphaga (Amoeba).